The chain runs to 205 residues: Ribosomal RNA small subunit methyltransferase G (205 aa).

S-adenosyl-L-methionine-binding positions include Gly76, Leu81, 127–128 (IE), and Arg140.

Belongs to the methyltransferase superfamily. RNA methyltransferase RsmG family.

It localises to the cytoplasm. It catalyses the reaction guanosine(527) in 16S rRNA + S-adenosyl-L-methionine = N(7)-methylguanosine(527) in 16S rRNA + S-adenosyl-L-homocysteine. In terms of biological role, specifically methylates the N7 position of guanine in position 527 of 16S rRNA. The chain is Ribosomal RNA small subunit methyltransferase G from Francisella tularensis subsp. novicida (strain U112).